A 480-amino-acid polypeptide reads, in one-letter code: Proline--tRNA ligase (480 aa).

It belongs to the class-II aminoacyl-tRNA synthetase family. ProS type 3 subfamily. In terms of assembly, homodimer.

The protein resides in the cytoplasm. It catalyses the reaction tRNA(Pro) + L-proline + ATP = L-prolyl-tRNA(Pro) + AMP + diphosphate. Its function is as follows. Catalyzes the attachment of proline to tRNA(Pro) in a two-step reaction: proline is first activated by ATP to form Pro-AMP and then transferred to the acceptor end of tRNA(Pro). The polypeptide is Proline--tRNA ligase (Pyrococcus abyssi (strain GE5 / Orsay)).